Reading from the N-terminus, the 248-residue chain is 4-hydroxy-tetrahydrodipicolinate reductase (248 aa).

NAD(+) is bound by residues 9–14, 77–79, and 104–107; these read GAQGRV, GTT, and APNF. Residue His-134 is the Proton donor/acceptor of the active site. Position 135 (His-135) interacts with (S)-2,3,4,5-tetrahydrodipicolinate. Lys-138 functions as the Proton donor in the catalytic mechanism. 144–145 contacts (S)-2,3,4,5-tetrahydrodipicolinate; it reads GT. Residues 157–176 form a disordered region; that stretch reads RREAGMPTQPDATEQSLDGA.

Belongs to the DapB family.

Its subcellular location is the cytoplasm. It catalyses the reaction (S)-2,3,4,5-tetrahydrodipicolinate + NAD(+) + H2O = (2S,4S)-4-hydroxy-2,3,4,5-tetrahydrodipicolinate + NADH + H(+). The enzyme catalyses (S)-2,3,4,5-tetrahydrodipicolinate + NADP(+) + H2O = (2S,4S)-4-hydroxy-2,3,4,5-tetrahydrodipicolinate + NADPH + H(+). It participates in amino-acid biosynthesis; L-lysine biosynthesis via DAP pathway; (S)-tetrahydrodipicolinate from L-aspartate: step 4/4. Functionally, catalyzes the conversion of 4-hydroxy-tetrahydrodipicolinate (HTPA) to tetrahydrodipicolinate. The chain is 4-hydroxy-tetrahydrodipicolinate reductase from Corynebacterium diphtheriae (strain ATCC 700971 / NCTC 13129 / Biotype gravis).